The following is a 164-amino-acid chain: Thiol peroxidase (164 aa).

Positions 17–162 (IKVGDTFPDF…YDEVLQAAQA (146 aa)) constitute a Thioredoxin domain. Residue C58 is the Cysteine sulfenic acid (-SOH) intermediate of the active site. Cysteines 58 and 92 form a disulfide.

The protein belongs to the peroxiredoxin family. Tpx subfamily. In terms of assembly, homodimer.

The catalysed reaction is a hydroperoxide + [thioredoxin]-dithiol = an alcohol + [thioredoxin]-disulfide + H2O. Its function is as follows. Thiol-specific peroxidase that catalyzes the reduction of hydrogen peroxide and organic hydroperoxides to water and alcohols, respectively. Plays a role in cell protection against oxidative stress by detoxifying peroxides. This is Thiol peroxidase from Clostridium acetobutylicum (strain ATCC 824 / DSM 792 / JCM 1419 / IAM 19013 / LMG 5710 / NBRC 13948 / NRRL B-527 / VKM B-1787 / 2291 / W).